The primary structure comprises 142 residues: Large ribosomal subunit protein uL13 (142 aa).

This sequence belongs to the universal ribosomal protein uL13 family. Part of the 50S ribosomal subunit.

In terms of biological role, this protein is one of the early assembly proteins of the 50S ribosomal subunit, although it is not seen to bind rRNA by itself. It is important during the early stages of 50S assembly. This chain is Large ribosomal subunit protein uL13, found in Acidithiobacillus ferrooxidans (strain ATCC 23270 / DSM 14882 / CIP 104768 / NCIMB 8455) (Ferrobacillus ferrooxidans (strain ATCC 23270)).